Here is a 521-residue protein sequence, read N- to C-terminus: Zinc finger and BTB domain-containing protein 18 (521 aa).

Residues 24–91 form the BTB domain; sequence CDCTVLVGDA…MYEGKLQFKD (68 aa). Residues 190–230 form a disordered region; the sequence is DSASIPQTGGEAETHTAAAGKTADSPCSSTGSLSHRSATSM. Residues 197 to 212 are compositionally biased toward low complexity; the sequence is TGGEAETHTAAAGKTA. Residues 214-230 are compositionally biased toward polar residues; the sequence is SPCSSTGSLSHRSATSM. 4 consecutive C2H2-type zinc fingers follow at residues 369–391, 409–431, 437–459, and 465–488; these read FMCP…LSTH, PTCS…ERTH, FTCT…AVVH, and HACK…RKFH.

The protein belongs to the krueppel C2H2-type zinc-finger protein family. ZBTB18 subfamily.

Its subcellular location is the nucleus. Transcriptional repressor that plays a role in various developmental processes. Specifically binds the consensus DNA sequence 5'-[AC]ACATCTG[GT][AC]-3' which contains the E box core, and acts by recruiting chromatin remodeling multiprotein complexes. The chain is Zinc finger and BTB domain-containing protein 18 (zbtb18) from Xenopus tropicalis (Western clawed frog).